Reading from the N-terminus, the 817-residue chain is B lymphocyte-induced maturation protein 1 homolog (817 aa).

The segment at 1–62 (MGQGSGDDGV…PAGVSASGAR (62 aa)) is disordered. Positions 15–61 (FSSAAAAAHSPPHSPLSVGVSSASSATSSSSTPPSSTSPAGVSASGA) are enriched in low complexity. The SET domain maps to 103 to 241 (MNLILKSSSK…ANTELSFWFS (139 aa)). 4 consecutive C2H2-type zinc fingers follow at residues 508 to 530 (YACK…VRTH), 536 to 558 (FKCE…HLVH), 564 to 586 (HRCD…LRLH), and 592 to 614 (YTCD…KRLH). The C2H2-type 5; degenerate zinc finger occupies 620-642 (YSCGTCGKKYISPSGLRTHWKTT). Residues 709–817 (LLGQGPSGMQ…LPSLGLPHYP (109 aa)) are disordered. Low complexity predominate over residues 779–794 (QGGPSSGSGQQQHPQH).

As to quaternary structure, interacts with dre-1; the interaction targets blmp-1 for proteasomal degradation. Interacts with ldb-1 and ham-3. In terms of processing, ubiquitinated by the SCF(dre-1) complex, leading to its degradation by the proteasome. Expressed in hypodermal, vulval, intestinal and distal tip cells.

Its subcellular location is the nucleus. The protein resides in the cytoplasm. Its function is as follows. Transcription factor which binds to enhancer elements in the promoter region of genes. Regulates the expression of the transcription factor bed-3 to control vulval development. Promotes terminal differentiation in the hypodermis and is involved in regulation of gonadal outgrowth and entry into the dauer stage. Regulates the timing of dorsalward migration of the distal tip cells of the hermaphrodite gonad by inhibiting precocious unc-5 and lin-29 expression which in turn prevents early dorsalward turning. Plays a role in male tail tip morphogenesis. The protein is B lymphocyte-induced maturation protein 1 homolog of Caenorhabditis elegans.